The chain runs to 859 residues: Villin-like protein (859 aa).

Gelsolin-like repeat units follow at residues 24-76 (LKML…EARE), 148-188 (VSAT…SEKA), 264-308 (LVVQ…QEKK), 401-450 (LQRQ…EDTK), 521-561 (TRTM…DQRE), and 624-665 (LVLT…WKKE). One can recognise an HP domain in the interval 793-859 (SMVNGSLPRE…QQAKKKLGFF (67 aa)).

This sequence belongs to the villin/gelsolin family.

Possible tumor suppressor. The sequence is that of Villin-like protein from Mus musculus (Mouse).